Here is a 138-residue protein sequence, read N- to C-terminus: Basic phospholipase A2 DsM-b1/DsM-b1' (138 aa).

The N-terminal stretch at 1-16 (MRTLWIVAMCLIGVEG) is a signal peptide. Cystine bridges form between Cys-42/Cys-131, Cys-44/Cys-60, Cys-59/Cys-111, Cys-65/Cys-138, Cys-66/Cys-104, Cys-73/Cys-97, and Cys-91/Cys-102. 3 residues coordinate Ca(2+): Tyr-43, Gly-45, and Gly-47. The active site involves His-63. Residue Asp-64 coordinates Ca(2+). Asp-105 is an active-site residue.

Requires Ca(2+) as cofactor. Expressed by the venom gland.

The protein localises to the secreted. It carries out the reaction a 1,2-diacyl-sn-glycero-3-phosphocholine + H2O = a 1-acyl-sn-glycero-3-phosphocholine + a fatty acid + H(+). Exhibits high hydrolytic activities and shows strong preference for the anionic micelles (dPPC with deoxycholate) to the zwitterionic micelles (dPPC with Triton X-100). PLA2 catalyzes the calcium-dependent hydrolysis of the 2-acyl groups in 3-sn-phosphoglycerides. The chain is Basic phospholipase A2 DsM-b1/DsM-b1' from Daboia siamensis (Eastern Russel's viper).